The primary structure comprises 73 residues: Putative membrane protein insertion efficiency factor (73 aa).

Belongs to the UPF0161 family.

It localises to the cell inner membrane. Its function is as follows. Could be involved in insertion of integral membrane proteins into the membrane. This is Putative membrane protein insertion efficiency factor from Bacteroides fragilis (strain ATCC 25285 / DSM 2151 / CCUG 4856 / JCM 11019 / LMG 10263 / NCTC 9343 / Onslow / VPI 2553 / EN-2).